A 66-amino-acid polypeptide reads, in one-letter code: MLKNLKDLTLEDMKVKRLTLKKEYMDLRFKTVVGHVENPLKKRELRRDIARLNTIIHEYAIGIRKV.

This sequence belongs to the universal ribosomal protein uL29 family.

The sequence is that of Large ribosomal subunit protein uL29 from Borrelia recurrentis (strain A1).